A 748-amino-acid polypeptide reads, in one-letter code: Cytosolic phospholipase A2 (748 aa).

Positions 1 to 178 (MSFIDPYQHI…MKKLLGPKKS (178 aa)) are phospholipid binding. Serine 2 is subject to Phosphoserine. Positions 6–122 (PYQHIIVEHQ…KVGEKKEVPF (117 aa)) constitute a C2 domain. Residues aspartate 40, threonine 41, aspartate 43, asparagine 65, aspartate 93, alanine 94, and asparagine 95 each contribute to the Ca(2+) site. One can recognise a PLA2c domain in the interval 140–739 (SCPDLRFSMA…SNVEARKFFN (600 aa)). Serine 228 acts as the Nucleophile in catalysis. Threonine 268 is subject to Phosphothreonine. The segment at 427-458 (KHIVSNDSSDSDDEAQGPKGTENEEAEKEYQS) is disordered. Residues serine 434, serine 435, and serine 437 each carry the phosphoserine modification. Residue serine 505 is modified to Phosphoserine; by MAPK. At serine 515 the chain carries Phosphoserine. Lysine 540 participates in a covalent cross-link: Glycyl lysine isopeptide (Lys-Gly) (interchain with G-Cter in SUMO2). Aspartate 548 (proton acceptor) is an active-site residue. Lysine 605 is covalently cross-linked (Glycyl lysine isopeptide (Lys-Gly) (interchain with G-Cter in SUMO2)). Phosphoserine occurs at positions 726 and 728.

In terms of assembly, interacts with KAT5. Phosphorylated at both Ser-505 and Ser-726 in response to mitogenic stimuli. As to expression, expressed in various organs including uterus, kidney, spleen, liver, heart, lung and brain (at protein level).

It localises to the cytoplasm. It is found in the golgi apparatus membrane. The protein localises to the nucleus envelope. It carries out the reaction a 1,2-diacyl-sn-glycero-3-phosphocholine + H2O = a 1-acyl-sn-glycero-3-phosphocholine + a fatty acid + H(+). It catalyses the reaction a 1-O-alkyl-2-acyl-sn-glycero-3-phosphocholine + H2O = a 1-O-alkyl-sn-glycero-3-phosphocholine + a fatty acid + H(+). The enzyme catalyses a 1-acyl-sn-glycero-3-phosphocholine + H2O = sn-glycerol 3-phosphocholine + a fatty acid + H(+). The catalysed reaction is 1-hexadecanoyl-2-(5Z,8Z,11Z,14Z-eicosatetraenoyl)-sn-glycero-3-phosphocholine + H2O = 1-hexadecanoyl-sn-glycero-3-phosphocholine + (5Z,8Z,11Z,14Z)-eicosatetraenoate + H(+). It carries out the reaction 1,2-di-(5Z,8Z,11Z,14Z-eicosatetraenoyl)-sn-glycero-3-phosphocholine + H2O = 1-(5Z,8Z,11Z,14Z-eicosatetraenoyl)-sn-glycero-3-phosphocholine + (5Z,8Z,11Z,14Z)-eicosatetraenoate + H(+). It catalyses the reaction 1-octadecanoyl-2-(5Z,8Z,11Z,14Z-eicosatetraenoyl)-sn-glycero-3-phosphocholine + H2O = 1-octadecanoyl-sn-glycero-3-phosphocholine + (5Z,8Z,11Z,14Z)-eicosatetraenoate + H(+). The enzyme catalyses 1-hexadecanoyl-2-(9Z,12Z-octadecadienoyl)-sn-glycero-3-phosphocholine + H2O = (9Z,12Z)-octadecadienoate + 1-hexadecanoyl-sn-glycero-3-phosphocholine + H(+). The catalysed reaction is 1-octadecanoyl-2-(9Z,12Z,15Z-octadecatrienoyl)-sn-glycero-3-phosphocholine + H2O = (9Z,12Z,15Z)-octadecatrienoate + 1-octadecanoyl-sn-glycero-3-phosphocholine + H(+). It carries out the reaction 1-(5Z,8Z,11Z,14Z-eicosatetraenoyl)-2-hexadecanoyl-sn-glycero-3-phosphocholine + H2O = 1-(5Z,8Z,11Z,14Z-eicosatetraenoyl)-sn-glycero-3-phosphocholine + hexadecanoate + H(+). It catalyses the reaction 1-O-hexadecyl-2-(5Z,8Z,11Z,14Z)-eicosatetraenoyl-sn-glycero-3-phosphocholine + H2O = 1-O-hexadecyl-sn-glycero-3-phosphocholine + (5Z,8Z,11Z,14Z)-eicosatetraenoate + H(+). The enzyme catalyses 1,2-di-(9Z-octadecenoyl)-sn-glycero-3-phospho-(1'-sn-glycerol) + H2O = 1-(9Z-octadecenoyl)-sn-glycero-3-phospho-(1'-sn-glycerol) + (9Z)-octadecenoate + H(+). The catalysed reaction is 1-octadecanoyl-2-(5Z,8Z,11Z,14Z-eicosatetraenoyl)-sn-glycero-3-phosphate + H2O = 1-octadecanoyl-sn-glycero-3-phosphate + (5Z,8Z,11Z,14Z)-eicosatetraenoate + H(+). It carries out the reaction 1-hexadecanoyl-sn-glycero-3-phosphocholine + H2O = sn-glycerol 3-phosphocholine + hexadecanoate + H(+). It catalyses the reaction 2-(prostaglandin E2)-sn-glycero-3-phosphoethanolamine + H2O = sn-glycero-3-phosphoethanolamine + prostaglandin E2 + H(+). The enzyme catalyses 2-[(15S)-hydroxy-(5Z,8Z,11Z,13E)-eicosatetraenoyl]-sn-glycero-3-phosphocholine + H2O = (15S)-hydroxy-(5Z,8Z,11Z,13E)-eicosatetraenoate + sn-glycerol 3-phosphocholine + H(+). The catalysed reaction is 2-[(15R)-hydroxy-(5Z,8Z,11Z,13E)-eicosatetraenoyl]-sn-glycero-3-phosphocholine + H2O = (15R)-hydroxy-(5Z,8Z,11Z,13E)-eicosatetraenoate + sn-glycerol 3-phosphocholine + H(+). It carries out the reaction 2-(prostaglandin E2)-sn-glycero-3-phosphocholine + H2O = prostaglandin E2 + sn-glycerol 3-phosphocholine + H(+). It catalyses the reaction 2-[(11R)-hydroxy-(5Z,8Z,12E,14Z)-eicosatetraenoyl]-sn-glycero-3-phosphocholine + H2O = (11R)-hydroxy-(5Z,8Z,12E,14Z)-eicosatetraenoate + sn-glycerol 3-phosphocholine + H(+). The enzyme catalyses 1-(5Z,8Z,11Z,14Z-eicosatetraenoyl)-2-O-hexadecyl-sn-glycero-3-phosphocholine + H2O = 2-O-hexadecyl-sn-glycero-3-phosphocholine + (5Z,8Z,11Z,14Z)-eicosatetraenoate + H(+). The catalysed reaction is 1-octadecanoyl-2-(5Z,8Z,11Z,14Z-eicosatetraenoyl)-sn-glycero-3-phosphocholine + glycerol = 1-(5Z,8Z,11Z,14Z-eicosatetraenoyl)-glycerol + 1-octadecanoyl-sn-glycero-3-phosphocholine. It carries out the reaction 1-octadecanoyl-2-(9Z,12Z,15Z-octadecatrienoyl)-sn-glycero-3-phosphocholine + glycerol = 1-(9Z,12Z,15Z-octadecatrienoyl)-glycerol + 1-octadecanoyl-sn-glycero-3-phosphocholine. It participates in membrane lipid metabolism; glycerophospholipid metabolism. Its pathway is lipid metabolism; arachidonate metabolism. It functions in the pathway lipid metabolism; prostaglandin biosynthesis. The protein operates within lipid metabolism; leukotriene B4 biosynthesis. Its activity is regulated as follows. Activated by cytosolic calcium, which is necessary for binding to membrane lipids. Activated by phosphorylation in response to mitogenic stimuli. Stimulated by agonists such as ATP and thrombin. Its function is as follows. Has primarily calcium-dependent phospholipase and lysophospholipase activities, with a major role in membrane lipid remodeling and biosynthesis of lipid mediators of the inflammatory response. Plays an important role in embryo implantation and parturition through its ability to trigger prostanoid production. Preferentially hydrolyzes the ester bond of the fatty acyl group attached at sn-2 position of phospholipids (phospholipase A2 activity). Selectively hydrolyzes sn-2 arachidonoyl group from membrane phospholipids, providing the precursor for eicosanoid biosynthesis via the cyclooxygenase pathway. In an alternative pathway of eicosanoid biosynthesis, hydrolyzes sn-2 fatty acyl chain of eicosanoid lysophopholipids to release free bioactive eicosanoids. Hydrolyzes the ester bond of the fatty acyl group attached at sn-1 position of phospholipids (phospholipase A1 activity) only if an ether linkage rather than an ester linkage is present at the sn-2 position. This hydrolysis is not stereospecific. Has calcium-independent phospholipase A2 and lysophospholipase activities in the presence of phosphoinositides. Has O-acyltransferase activity. Catalyzes the transfer of fatty acyl chains from phospholipids to a primary hydroxyl group of glycerol (sn-1 or sn-3), potentially contributing to monoacylglycerol synthesis. This chain is Cytosolic phospholipase A2 (Pla2g4a), found in Mus musculus (Mouse).